We begin with the raw amino-acid sequence, 1336 residues long: Cytokinesis protein sepH (1336 aa).

The segment covering 1 to 10 (MVSRSSETSE) has biased composition (low complexity). The disordered stretch occupies residues 1-46 (MVSRSSETSEGPPPPSKIPGTPAKTRLSRLNSSPAKQDKPKDDRVV). Basic and acidic residues predominate over residues 36–46 (KQDKPKDDRVV). Residues 59-309 (YQLGDCLGKG…ARKLLKHPWI (251 aa)) form the Protein kinase domain. ATP-binding positions include 65-73 (LGKGAFGSV) and Lys88. The active-site Proton acceptor is the Asp181. A disordered region spans residues 368 to 402 (SRYTPTKDILPSPVSKHVTDRFRSPDSTEEDNWDD). Residues 384–393 (HVTDRFRSPD) are compositionally biased toward basic and acidic residues. The stretch at 654–682 (AQLEEGLDEVDLEANIARDKYARLRGQVE) forms a coiled coil. The span at 1194–1205 (ERSESFSLEKRK) shows a compositional bias: basic and acidic residues. The segment at 1194-1336 (ERSESFSLEK…PTHADSDWAS (143 aa)) is disordered. Polar residues predominate over residues 1213-1236 (TSTTPPGYLANQSAPATPQINRFN). Composition is skewed to low complexity over residues 1253-1264 (PSLSSSALALRP) and 1272-1285 (PSLS…AGPS). The segment covering 1315-1327 (SRRRSILPQRRRP) has biased composition (basic residues).

This sequence belongs to the protein kinase superfamily. Ser/Thr protein kinase family. CDC7 subfamily. Mg(2+) is required as a cofactor.

It carries out the reaction L-seryl-[protein] + ATP = O-phospho-L-seryl-[protein] + ADP + H(+). The enzyme catalyses L-threonyl-[protein] + ATP = O-phospho-L-threonyl-[protein] + ADP + H(+). Its function is as follows. Required for early events during cytokinesis including localization of cytoskeletal components to the cytokinetic ring. The polypeptide is Cytokinesis protein sepH (Aspergillus niger (strain ATCC MYA-4892 / CBS 513.88 / FGSC A1513)).